Consider the following 342-residue polypeptide: Serine/threonine-protein kinase-transforming protein mos (342 aa).

The Protein kinase domain maps to 63 to 338 (VCLMHRLGSG…LLQRDLKAFR (276 aa)). Residues 69 to 77 (LGSGGFGSV) and Lys-90 contribute to the ATP site. The active-site Proton acceptor is Asp-198.

The protein belongs to the protein kinase superfamily. Ser/Thr protein kinase family.

The catalysed reaction is L-seryl-[protein] + ATP = O-phospho-L-seryl-[protein] + ADP + H(+). It catalyses the reaction L-threonyl-[protein] + ATP = O-phospho-L-threonyl-[protein] + ADP + H(+). The polypeptide is Serine/threonine-protein kinase-transforming protein mos (V-MOS) (Myeloproliferative sarcoma virus (isolate ts159)).